Consider the following 645-residue polypeptide: Acetyl-coenzyme A synthetase (645 aa).

Residues 190-193 and Thr-308 contribute to the CoA site; that span reads RGGK. ATP contacts are provided by residues 384 to 386, 408 to 413, Asp-497, and Arg-512; these read GEP and DTWWQT. A CoA-binding site is contributed by Ser-520. Arg-523 contacts ATP. Residues Val-534, His-536, and Ile-539 each coordinate Mg(2+). Position 606 is an N6-acetyllysine (Lys-606).

It belongs to the ATP-dependent AMP-binding enzyme family. Mg(2+) serves as cofactor. In terms of processing, acetylated. Deacetylation by the SIR2-homolog deacetylase activates the enzyme.

It carries out the reaction acetate + ATP + CoA = acetyl-CoA + AMP + diphosphate. Functionally, catalyzes the conversion of acetate into acetyl-CoA (AcCoA), an essential intermediate at the junction of anabolic and catabolic pathways. AcsA undergoes a two-step reaction. In the first half reaction, AcsA combines acetate with ATP to form acetyl-adenylate (AcAMP) intermediate. In the second half reaction, it can then transfer the acetyl group from AcAMP to the sulfhydryl group of CoA, forming the product AcCoA. The sequence is that of Acetyl-coenzyme A synthetase from Alcanivorax borkumensis (strain ATCC 700651 / DSM 11573 / NCIMB 13689 / SK2).